The primary structure comprises 228 residues: Ephrin-A5 (228 aa).

An N-terminal signal peptide occupies residues Met-1 to Ser-20. The Ephrin RBD domain occupies Ala-29–Asn-162. Asn-37 carries N-linked (GlcNAc...) asparagine glycosylation. Intrachain disulfides connect Cys-62-Cys-102 and Cys-90-Cys-151. Residues Glu-186–Ala-205 are disordered. The segment covering Asp-190–Arg-200 has biased composition (basic and acidic residues). The GPI-anchor amidated asparagine moiety is linked to residue Asn-203. Positions Ala-204–Leu-228 are cleaved as a propeptide — removed in mature form.

It belongs to the ephrin family. In terms of assembly, binds to the receptor tyrosine kinases EPHA2, EPHA3, EPHB1 and EPHB2. Interacts with EPHA8; activates EPHA8. Forms a ternary EFNA5-EPHA3-ADAM10 complex mediating EFNA5 extracellular domain shedding by ADAM10 which regulates the EFNA5-EPHA3 complex internalization and function. In terms of tissue distribution, expressed in brain, heart, placenta and lung.

It is found in the cell membrane. Its subcellular location is the membrane. The protein localises to the caveola. Cell surface GPI-bound ligand for Eph receptors, a family of receptor tyrosine kinases which are crucial for migration, repulsion and adhesion during neuronal, vascular and epithelial development. Binds promiscuously Eph receptors residing on adjacent cells, leading to contact-dependent bidirectional signaling into neighboring cells. The signaling pathway downstream of the receptor is referred to as forward signaling while the signaling pathway downstream of the ephrin ligand is referred to as reverse signaling. Induces compartmentalized signaling within a caveolae-like membrane microdomain when bound to the extracellular domain of its cognate receptor. This signaling event requires the activity of the Fyn tyrosine kinase. Activates the EPHA3 receptor to regulate cell-cell adhesion and cytoskeletal organization. With the receptor EPHA2 may regulate lens fiber cells shape and interactions and be important for lens transparency maintenance. May function actively to stimulate axon fasciculation. The interaction of EFNA5 with EPHA5 also mediates communication between pancreatic islet cells to regulate glucose-stimulated insulin secretion. Cognate/functional ligand for EPHA7, their interaction regulates brain development modulating cell-cell adhesion and repulsion. The sequence is that of Ephrin-A5 (Efna5) from Rattus norvegicus (Rat).